We begin with the raw amino-acid sequence, 262 residues long: Ribosome-recycling factor, mitochondrial (262 aa).

A mitochondrion-targeting transit peptide spans 1 to 55; that stretch reads MALGLRCFRLVHPAFCNSLAALTRPVSEVTLQTVRGRQNDHGQCMAYAAVPVRHF.

The protein belongs to the RRF family.

The protein resides in the mitochondrion. Its function is as follows. Responsible for the disassembly of ribosomes from messenger RNA at the termination of mitochondrial protein biosynthesis. Acts in collaboration with GFM2. Promotes mitochondrial ribosome recycling by dissolution of intersubunit contacts. In Bos taurus (Bovine), this protein is Ribosome-recycling factor, mitochondrial (MRRF).